The chain runs to 450 residues: Bifunctional protein GlmU (450 aa).

Residues 1–229 (MRRHAIILAA…VEEIMGVNDR (229 aa)) are pyrophosphorylase. UDP-N-acetyl-alpha-D-glucosamine-binding positions include 8–11 (LAAG), K22, Q72, and 77–78 (GT). D102 contacts Mg(2+). G139, E154, and N227 together coordinate UDP-N-acetyl-alpha-D-glucosamine. N227 contacts Mg(2+). A linker region spans residues 230-250 (VMLSQAEKAMQRRTNHYHMLN). An N-acetyltransferase region spans residues 251 to 450 (GVTIIDPDST…RQTTKEGYRK (200 aa)). Residues R332 and K350 each coordinate UDP-N-acetyl-alpha-D-glucosamine. H362 functions as the Proton acceptor in the catalytic mechanism. Y365 and N376 together coordinate UDP-N-acetyl-alpha-D-glucosamine. Residues 385–386 (NY), A422, and R439 contribute to the acetyl-CoA site.

This sequence in the N-terminal section; belongs to the N-acetylglucosamine-1-phosphate uridyltransferase family. The protein in the C-terminal section; belongs to the transferase hexapeptide repeat family. Homotrimer. It depends on Mg(2+) as a cofactor.

It localises to the cytoplasm. It catalyses the reaction alpha-D-glucosamine 1-phosphate + acetyl-CoA = N-acetyl-alpha-D-glucosamine 1-phosphate + CoA + H(+). The enzyme catalyses N-acetyl-alpha-D-glucosamine 1-phosphate + UTP + H(+) = UDP-N-acetyl-alpha-D-glucosamine + diphosphate. It participates in nucleotide-sugar biosynthesis; UDP-N-acetyl-alpha-D-glucosamine biosynthesis; N-acetyl-alpha-D-glucosamine 1-phosphate from alpha-D-glucosamine 6-phosphate (route II): step 2/2. The protein operates within nucleotide-sugar biosynthesis; UDP-N-acetyl-alpha-D-glucosamine biosynthesis; UDP-N-acetyl-alpha-D-glucosamine from N-acetyl-alpha-D-glucosamine 1-phosphate: step 1/1. It functions in the pathway bacterial outer membrane biogenesis; LPS lipid A biosynthesis. Catalyzes the last two sequential reactions in the de novo biosynthetic pathway for UDP-N-acetylglucosamine (UDP-GlcNAc). The C-terminal domain catalyzes the transfer of acetyl group from acetyl coenzyme A to glucosamine-1-phosphate (GlcN-1-P) to produce N-acetylglucosamine-1-phosphate (GlcNAc-1-P), which is converted into UDP-GlcNAc by the transfer of uridine 5-monophosphate (from uridine 5-triphosphate), a reaction catalyzed by the N-terminal domain. In Staphylococcus aureus (strain Mu50 / ATCC 700699), this protein is Bifunctional protein GlmU.